A 52-amino-acid chain; its full sequence is UPF0181 protein VPA0916 (52 aa).

It belongs to the UPF0181 family.

The sequence is that of UPF0181 protein VPA0916 from Vibrio parahaemolyticus serotype O3:K6 (strain RIMD 2210633).